A 419-amino-acid polypeptide reads, in one-letter code: Serine hydroxymethyltransferase (419 aa).

(6S)-5,6,7,8-tetrahydrofolate-binding positions include leucine 121 and 125–127 (GHL). The residue at position 229 (lysine 229) is an N6-(pyridoxal phosphate)lysine.

The protein belongs to the SHMT family. In terms of assembly, homodimer. The cofactor is pyridoxal 5'-phosphate.

Its subcellular location is the cytoplasm. The catalysed reaction is (6R)-5,10-methylene-5,6,7,8-tetrahydrofolate + glycine + H2O = (6S)-5,6,7,8-tetrahydrofolate + L-serine. The protein operates within one-carbon metabolism; tetrahydrofolate interconversion. It participates in amino-acid biosynthesis; glycine biosynthesis; glycine from L-serine: step 1/1. Catalyzes the reversible interconversion of serine and glycine with tetrahydrofolate (THF) serving as the one-carbon carrier. This reaction serves as the major source of one-carbon groups required for the biosynthesis of purines, thymidylate, methionine, and other important biomolecules. Also exhibits THF-independent aldolase activity toward beta-hydroxyamino acids, producing glycine and aldehydes, via a retro-aldol mechanism. The sequence is that of Serine hydroxymethyltransferase from Histophilus somni (strain 2336) (Haemophilus somnus).